The primary structure comprises 64 residues: Defensin-like protein 123 (64 aa).

4 disulfides stabilise this stretch: Cys19–Cys62, Cys29–Cys49, Cys34–Cys56, and Cys38–Cys58.

The protein belongs to the DEFL family.

This is Defensin-like protein 123 from Arabidopsis thaliana (Mouse-ear cress).